Consider the following 505-residue polypeptide: RNA-splicing ligase RtcB homolog (505 aa).

Mn(2+) contacts are provided by D119, C122, H227, and H259. 226–230 (NHYAE) contacts GMP. Phosphoserine is present on S300. H353 contributes to the Mn(2+) binding site. GMP is bound by residues 353–354 (HN), 402–405 (GGTM), S409, and 428–431 (HGAG). H428 acts as the GMP-histidine intermediate in catalysis. K496 participates in a covalent cross-link: Glycyl lysine isopeptide (Lys-Gly) (interchain with G-Cter in SUMO2). K504 serves as a coordination point for GMP.

Belongs to the RtcB family. In terms of assembly, catalytic component of the tRNA-splicing ligase complex. It depends on Mn(2+) as a cofactor.

The protein localises to the nucleus. It is found in the cytoplasm. The enzyme catalyses a 3'-end 3'-phospho-ribonucleotide-RNA + a 5'-end dephospho-ribonucleoside-RNA + GTP = a ribonucleotidyl-ribonucleotide-RNA + GMP + diphosphate. It catalyses the reaction a 3'-end 2',3'-cyclophospho-ribonucleotide-RNA + a 5'-end dephospho-ribonucleoside-RNA + GTP + H2O = a ribonucleotidyl-ribonucleotide-RNA + GMP + diphosphate + H(+). Its activity is regulated as follows. Protein archease stimulates the activity of the tRNA ligase complex with high efficiency in the presence of GTP. In terms of biological role, catalytic subunit of the tRNA-splicing ligase complex that acts by directly joining spliced tRNA halves to mature-sized tRNAs by incorporating the precursor-derived splice junction phosphate into the mature tRNA as a canonical 3',5'-phosphodiester. May act as an RNA ligase with broad substrate specificity, and may function toward other RNAs. The protein is RNA-splicing ligase RtcB homolog of Homo sapiens (Human).